Reading from the N-terminus, the 706-residue chain is Translation initiation factor IF-2 (706 aa).

The interval 55 to 117 (KEVNSDSNQE…PTMKDEKGLI (63 aa)) is disordered. Residues 67–81 (VNTDDKLDKIDKPNK) show a composition bias toward basic and acidic residues. A compositionally biased stretch (basic residues) spans 93 to 108 (KNKKSKKKQKNKKKGP). One can recognise a tr-type G domain in the interval 208–375 (SRPPVVTVMG…MILLVSEVEE (168 aa)). Residues 217 to 224 (GHVDHGKT) form a G1 region. Residue 217 to 224 (GHVDHGKT) participates in GTP binding. The segment at 242–246 (GITQH) is G2. The G3 stretch occupies residues 263–266 (DTPG). GTP is bound by residues 263–267 (DTPGH) and 317–320 (NKID). The tract at residues 317–320 (NKID) is G4. A G5 region spans residues 353 to 355 (SAI).

It belongs to the TRAFAC class translation factor GTPase superfamily. Classic translation factor GTPase family. IF-2 subfamily.

It is found in the cytoplasm. Its function is as follows. One of the essential components for the initiation of protein synthesis. Protects formylmethionyl-tRNA from spontaneous hydrolysis and promotes its binding to the 30S ribosomal subunits. Also involved in the hydrolysis of GTP during the formation of the 70S ribosomal complex. The protein is Translation initiation factor IF-2 of Alkaliphilus metalliredigens (strain QYMF).